Consider the following 326-residue polypeptide: Mitochondrial glycine transporter (326 aa).

Solcar repeat units follow at residues His-45–Tyr-134, Pro-141–Ala-225, and Leu-237–Arg-321. 6 helical membrane-spanning segments follow: residues Phe-51–Gln-76, Gly-109–Phe-135, Val-147–Glu-172, Gly-200–Arg-223, Ile-241–Met-267, and Gly-296–Val-314.

This sequence belongs to the mitochondrial carrier (TC 2.A.29) family. SLC25A38 subfamily.

It localises to the mitochondrion inner membrane. It carries out the reaction glycine(in) = glycine(out). In terms of biological role, mitochondrial glycine transporter that imports glycine into the mitochondrial matrix. Plays an important role in providing glycine for the first enzymatic step in heme biosynthesis, the condensation of glycine with succinyl-CoA to produce 5-aminolevulinate (ALA) in the mitochondrial matrix. Required during erythropoiesis. Plays a role as pro-apoptotic protein that induces caspase-dependent apoptosis. The protein is Mitochondrial glycine transporter of Mus musculus (Mouse).